Reading from the N-terminus, the 126-residue chain is Outer membrane lipoprotein omp10 (126 aa).

The N-terminal stretch at 1 to 19 (MKRFRIVAPLALMSLALAA) is a signal peptide. The N-palmitoyl cysteine moiety is linked to residue Cys20. Residue Cys20 is the site of S-diacylglycerol cysteine attachment.

This sequence belongs to the rhizobiaceae omp10 lipoprotein family.

The protein localises to the cell outer membrane. The sequence is that of Outer membrane lipoprotein omp10 (omp10) from Brucella abortus biovar 1 (strain 9-941).